The following is a 1263-amino-acid chain: MKEISCGRRTRVSFGKTQEPLPIPDLVEIQKISYRRFLEEGLLEVLKKFSPIYSQATRSDLKKSDRGFALEFVSTRIGEPVVDPLECKAKGLTYSVPIYATARLTDMKSGEMKEEEVFLGYIPYMTDRGTFIINGAERVVVNQIVVSPGLYFSSEYIDREEYGGYFLPSRGAWLEVILDPYDGVLYAGLDGKKVNLFLFLKTIGYEKDEDILSLYPTYLDADDEDSLLLHVGSILLEDIYDGDRKIAEKWDILTKDLAERILMIDDINQIKIVHPIAQNTFEKMLELVSSSGEEGEEEEEKTKIYGLNEVTVVDAYLEIFRRLRPEELPRINAAKRYLHDLFFNPERYDLSEVGRYKVNERLRNAYIRYLIEVEGEDPEEARKKVYNENSLVLKPLDIVLASRILFDYFERRYVNDFEIDSYELRNLIRIFKEEYLEKRKTASYDLRKLVSVFRRNYGVTSDLSVLAAIRYISNINKELPSIPFDTKDHLGNKRVRTVGELVQREFERLFARAQKAIQERLTLINSLSKVSIQSLINIKSIISTVNQFFAMNQLSQFMDQVNPLSELTHKRRVSAVGPGGLRRESKVFEARNVHYSQYGRLCPIETPEGANIGFITSLAIYTKIDEYGFLMTPYRKVVNGKVTDEVVYLRANEEEDFKIVPATTPVDEEGNIIPERVVARVGEDIRLVPREEVDFMDVSTKQPFSVSASLIPFLEHDDASRALMGSNMQRQAVPLLKAEAPFVGTGMEWEAAKNSGYVTLAEHDGIVKEVDAARIVVHRTDENGNLMYDDKGNPVVDEYRLLKFVRSNQDTMINQKPIVNEGDFVKKGDPIADGPATDMGELALGRNILVAFMPWEGYNYEDAILVSQELLEEDVFTSIHIEVYETQARETRLGPEEITADIPNVSKELLKNLDENGIIRVGAYVVSDYGVGSQAILVGKVTPKGEGDTTPEEKIIRSVFGERGRDVKDTSLRLPHGVEGRVIRVDVYDQNDIAELGAGVLKLVRVYVASRKTLDIGDKLAGRHGNKGVVSNILPKEDMPFLPDGTPVQMVLNPLGIPSRMNVGQILETHLGWLAKLTGKWFATPVFEGAKEDEILRPLYEERKKRGLHLGDDENNPNGKVVLRDGRTGEPFDNPVVVGYMYMLKLVHIAKEKIHARSTGPYSLIHQQPLGGKSHFGGQRLGEMEVWALEAYGAAHTLAEMLTIKSDDIKGRNEAYKAILKNMNIPEPGVPESFRVLIKELRGLALDVRLYDENGNEIDIDKY.

This sequence belongs to the RNA polymerase beta chain family. As to quaternary structure, the RNAP catalytic core consists of 2 alpha, 1 beta, 1 beta' and 1 omega subunit. When a sigma factor is associated with the core the holoenzyme is formed, which can initiate transcription.

The catalysed reaction is RNA(n) + a ribonucleoside 5'-triphosphate = RNA(n+1) + diphosphate. DNA-dependent RNA polymerase catalyzes the transcription of DNA into RNA using the four ribonucleoside triphosphates as substrates. In Thermotoga petrophila (strain ATCC BAA-488 / DSM 13995 / JCM 10881 / RKU-1), this protein is DNA-directed RNA polymerase subunit beta.